The following is a 380-amino-acid chain: MMTSTFGTTVKVSIFGESHAPKIGCTIEGLPAGFTVDLHELKTFLQRRSPSHPWDTPRKEIDNPKFVSGISAKGILDGFPLTAELPNNNVRQKDYTATKLVPRPGHADFSAWAKWGNSYKQTGGGHFSARLTAPLCIAGGIALQILHAQGITIAAHVLKIKNINDTPFKLIDNSVEANKLLALQMNQLLQAAPQELPFLDAQTGEKTRALLTQLRSEKNTVGGIIECVATGVPAGIGCPHFQGLENTISAAVFGVPAVKAIEFGSGMNVANLLGSENNDAYEVRDGSVVPTTNHAGGILGGISTGAPIWFRCALKPISSIGLSQHSVNLQTMESEQLVVQGRHDVTAVLRAVPCVESAFALALLDTLYSWPSEQNGYHND.

Residue arginine 48 coordinates NADP(+). Residues 126 to 128 (HFS), glycine 300, 315 to 319 (KPISS), and arginine 342 contribute to the FMN site.

This sequence belongs to the chorismate synthase family. As to quaternary structure, homotetramer. Requires FMNH2 as cofactor.

It catalyses the reaction 5-O-(1-carboxyvinyl)-3-phosphoshikimate = chorismate + phosphate. It functions in the pathway metabolic intermediate biosynthesis; chorismate biosynthesis; chorismate from D-erythrose 4-phosphate and phosphoenolpyruvate: step 7/7. Functionally, catalyzes the anti-1,4-elimination of the C-3 phosphate and the C-6 proR hydrogen from 5-enolpyruvylshikimate-3-phosphate (EPSP) to yield chorismate, which is the branch point compound that serves as the starting substrate for the three terminal pathways of aromatic amino acid biosynthesis. This reaction introduces a second double bond into the aromatic ring system. The polypeptide is Chorismate synthase (Lancefieldella parvula (strain ATCC 33793 / DSM 20469 / CCUG 32760 / JCM 10300 / KCTC 3663 / VPI 0546 / 1246) (Atopobium parvulum)).